Here is a 60-residue protein sequence, read N- to C-terminus: Cecropin-B type 2 (60 aa).

The N-terminal stretch at 1–24 (MNFSKLFALVLLIGLVLLTGQTEA) is a signal peptide. The residue at position 58 (I58) is an Isoleucine amide.

This sequence belongs to the cecropin family.

It localises to the secreted. Its function is as follows. Cecropins have lytic and antibacterial activity against several Gram-positive and Gram-negative bacteria. This chain is Cecropin-B type 2 (CECB2), found in Aedes albopictus (Asian tiger mosquito).